The chain runs to 140 residues: Large ribosomal subunit protein uL22 (140 aa).

It belongs to the universal ribosomal protein uL22 family. As to quaternary structure, part of the 50S ribosomal subunit.

This protein binds specifically to 23S rRNA; its binding is stimulated by other ribosomal proteins, e.g. L4, L17, and L20. It is important during the early stages of 50S assembly. It makes multiple contacts with different domains of the 23S rRNA in the assembled 50S subunit and ribosome. In terms of biological role, the globular domain of the protein is located near the polypeptide exit tunnel on the outside of the subunit, while an extended beta-hairpin is found that lines the wall of the exit tunnel in the center of the 70S ribosome. The sequence is that of Large ribosomal subunit protein uL22 from Parafrankia sp. (strain EAN1pec).